Here is a 452-residue protein sequence, read N- to C-terminus: PTS system N-acetylglucosamine-specific EIICB component (452 aa).

The PTS EIIC type-1 domain occupies 1–361 (MLSFLQKLGK…LNLKTPGRED (361 aa)). 9 helical membrane passes run 8–28 (LGKS…ILAL), 42–62 (AGTA…AIGI), 91–111 (TNNM…YTYN), 130–150 (LVPI…GVVW), 163–183 (WMLG…RLLI), 223–243 (MTGF…AMVV), 257–277 (MIGF…EFAF), 279–299 (FLSP…LFIV), and 329–349 (LLLL…YVLI). The region spanning 375-452 (DVNENIMLKG…AAEELRAAVK (78 aa)) is the PTS EIIB type-1 domain. Cys397 serves as the catalytic Phosphocysteine intermediate; for EIIB activity.

As to quaternary structure, interacts with FloT.

The protein resides in the cell membrane. The protein localises to the membrane raft. The enzyme catalyses N(pros)-phospho-L-histidyl-[protein] + N-acetyl-D-glucosamine(out) = N-acetyl-D-glucosamine 6-phosphate(in) + L-histidyl-[protein]. The phosphoenolpyruvate-dependent sugar phosphotransferase system (sugar PTS), a major carbohydrate active -transport system, catalyzes the phosphorylation of incoming sugar substrates concomitantly with their translocation across the cell membrane. This system is involved in N-acetylglucosamine transport. This chain is PTS system N-acetylglucosamine-specific EIICB component (nagP), found in Bacillus subtilis (strain 168).